The following is a 78-amino-acid chain: Beta-defensin 105A (78 aa).

A signal peptide spans M1 to A27. 3 cysteine pairs are disulfide-bonded: C43-C74, C53-C67, and C57-C73.

The protein belongs to the beta-defensin family.

The protein resides in the secreted. Its function is as follows. Has antimicrobial activity. The chain is Beta-defensin 105A (DEFB105A) from Macaca fascicularis (Crab-eating macaque).